Consider the following 213-residue polypeptide: NADH-quinone oxidoreductase subunit B 1 (213 aa).

[4Fe-4S] cluster is bound by residues Cys82, Cys83, Cys148, and Cys177.

This sequence belongs to the complex I 20 kDa subunit family. As to quaternary structure, NDH-1 is composed of 14 different subunits. Subunits NuoB, C, D, E, F, and G constitute the peripheral sector of the complex. [4Fe-4S] cluster is required as a cofactor.

Its subcellular location is the cell inner membrane. The catalysed reaction is a quinone + NADH + 5 H(+)(in) = a quinol + NAD(+) + 4 H(+)(out). Functionally, NDH-1 shuttles electrons from NADH, via FMN and iron-sulfur (Fe-S) centers, to quinones in the respiratory chain. The immediate electron acceptor for the enzyme in this species is believed to be ubiquinone. Couples the redox reaction to proton translocation (for every two electrons transferred, four hydrogen ions are translocated across the cytoplasmic membrane), and thus conserves the redox energy in a proton gradient. The chain is NADH-quinone oxidoreductase subunit B 1 from Koribacter versatilis (strain Ellin345).